Here is a 608-residue protein sequence, read N- to C-terminus: Albumin (608 aa).

Positions 1-18 (MKWVTFLLLLFISGSAFS) are cleaved as a signal peptide. Positions 19–24 (RGVFRR) are excised as a propeptide. Albumin domains follow at residues 19-211 (RGVF…AVKE), 212-403 (KALV…EFQP), and 404-601 (LVEE…NLVA). Residue His-27 coordinates Cu cation. Ser-29 bears the Phosphoserine mark. Glu-30 and Asp-37 together coordinate Ca(2+). Cys-77 and Cys-86 are disulfide-bonded. Ser-89 carries the post-translational modification Phosphoserine. His-91 is a Zn(2+) binding site. Disulfide bonds link Cys-99–Cys-115, Cys-114–Cys-125, Cys-148–Cys-193, Cys-192–Cys-201, Cys-224–Cys-270, and Cys-269–Cys-277. Ca(2+) is bound at residue Glu-268. 2 residues coordinate Zn(2+): His-271 and Asp-273. 3 residues coordinate Ca(2+): Asp-273, Glu-276, and Asp-279. 8 cysteine pairs are disulfide-bonded: Cys-289–Cys-303, Cys-302–Cys-313, Cys-340–Cys-385, Cys-384–Cys-393, Cys-416–Cys-462, Cys-461–Cys-472, Cys-485–Cys-501, and Cys-500–Cys-511. A Phosphoserine modification is found at Ser-297. At Ser-443 the chain carries Phosphoserine. 2 positions are modified to phosphothreonine: Thr-444 and Thr-446. Lys-460 carries the N6-succinyllysine modification. Ser-513 carries the post-translational modification Phosphoserine. 2 disulfides stabilise this stretch: Cys-538–Cys-583 and Cys-582–Cys-591. At Lys-543 the chain carries N6-succinyllysine. Residue Lys-558 is modified to N6-methyllysine. At Thr-570 the chain carries Phosphothreonine. Lys-588 is subject to N6-succinyllysine.

It belongs to the ALB/AFP/VDB family. As to quaternary structure, interacts with FCGRT; this interaction regulates ALB homeostasis. Interacts with TASOR. In plasma, occurs in a covalently-linked complex with chromophore-bound alpha-1-microglobulin; this interaction does not prevent fatty acid binding to ALB. Post-translationally, phosphorylated by FAM20C in the extracellular medium. Plasma.

It localises to the secreted. Its function is as follows. Binds water, Ca(2+), Na(+), K(+), fatty acids, hormones, bilirubin and drugs. Its main function is the regulation of the colloidal osmotic pressure of blood. Major zinc transporter in plasma, typically binds about 80% of all plasma zinc. Major calcium and magnesium transporter in plasma, binds approximately 45% of circulating calcium and magnesium in plasma. Potentially has more than two calcium-binding sites and might additionally bind calcium in a non-specific manner. The shared binding site between zinc and calcium at residue Asp-273 suggests a crosstalk between zinc and calcium transport in the blood. The rank order of affinity is zinc &gt; calcium &gt; magnesium. Binds to the bacterial siderophore enterobactin and inhibits enterobactin-mediated iron uptake of E.coli from ferric transferrin, and may thereby limit the utilization of iron and growth of enteric bacteria such as E.coli. Does not prevent iron uptake by the bacterial siderophore aerobactin. This is Albumin (Alb) from Rattus norvegicus (Rat).